The following is a 242-amino-acid chain: HTH-type transcriptional regulator GadW (242 aa).

One can recognise an HTH araC/xylS-type domain in the interval 139-236 (GKVERLISFD…GVTPHQFAQH (98 aa)). 2 DNA-binding regions (H-T-H motif) span residues 156–177 (RDIAERMYTSESLIKKKLQDEN) and 203–226 (LHTIAEKCGYSSTSYFINTFRQYY).

In terms of assembly, homodimer.

Its function is as follows. Depending on the conditions (growth phase and medium), acts as a positive or negative regulator of gadA and gadBC. Repression occurs directly or via the repression of the expression of gadX. Activation occurs directly by the binding of GadW to the gadA and gadBC promoters. This Escherichia coli (strain K12) protein is HTH-type transcriptional regulator GadW (gadW).